The following is a 317-amino-acid chain: Melanocyte-stimulating hormone receptor (317 aa).

The Extracellular segment spans residues M1–E37. N29 is a glycosylation site (N-linked (GlcNAc...) asparagine). Residues V38 to I63 form a helical membrane-spanning segment. The Cytoplasmic segment spans residues A64–P72. A helical membrane pass occupies residues M73 to L93. The Extracellular portion of the chain corresponds to D94–N118. Residues V119–V140 traverse the membrane as a helical segment. Over D141–R163 the chain is Cytoplasmic. A helical transmembrane segment spans residues V164–C183. The Extracellular segment spans residues D184 to C191. The chain crosses the membrane as a helical span at residues L192–L211. Residues A212–A240 lie on the Cytoplasmic side of the membrane. Residues A241 to L266 traverse the membrane as a helical segment. The Extracellular portion of the chain corresponds to C267–N279. Residues F280–F300 traverse the membrane as a helical segment. Over R301 to W317 the chain is Cytoplasmic. The S-palmitoyl cysteine moiety is linked to residue C315.

The protein belongs to the G-protein coupled receptor 1 family. As to quaternary structure, interacts with MGRN1, but does not undergo MGRN1-mediated ubiquitination; this interaction competes with GNAS-binding and thus inhibits agonist-induced cAMP production. Interacts with OPN3; the interaction results in a decrease in MC1R-mediated cAMP signaling and ultimately a decrease in melanin production in melanocytes.

It is found in the cell membrane. Receptor for MSH (alpha, beta and gamma) and ACTH. The activity of this receptor is mediated by G proteins which activate adenylate cyclase. Mediates melanogenesis, the production of eumelanin (black/brown) and phaeomelanin (red/yellow), via regulation of cAMP signaling in melanocytes. In Trachypithecus francoisi (Francois' leaf monkey), this protein is Melanocyte-stimulating hormone receptor (MC1R).